Reading from the N-terminus, the 90-residue chain is UPF0213 protein lwe0147 (90 aa).

Positions asparagine 5–isoleucine 83 constitute a GIY-YIG domain.

The protein belongs to the UPF0213 family.

The chain is UPF0213 protein lwe0147 from Listeria welshimeri serovar 6b (strain ATCC 35897 / DSM 20650 / CCUG 15529 / CIP 8149 / NCTC 11857 / SLCC 5334 / V8).